Consider the following 345-residue polypeptide: G-protein coupled receptor str-33 (345 aa).

The Extracellular segment spans residues 1-11; it reads MTVNLRDLSRT. A helical transmembrane segment spans residues 12 to 32; that stretch reads IAEFAFLTALVCNSLLIYLTA. Residues 33–37 lie on the Cytoplasmic side of the membrane; sequence RRTKN. The helical transmembrane segment at 38–58 threads the bilayer; it reads ITGAYKYMIILFALLGLIFSC. Residues 59 to 92 lie on the Extracellular side of the membrane; sequence TEMLARPFVHNFNASFVYFSLSNDLSEFKSLVQM. Asn71 carries an N-linked (GlcNAc...) asparagine glycan. Residues 93–113 traverse the membrane as a helical segment; sequence LLVLYSGLYSSLISFVAVQFI. The Cytoplasmic segment spans residues 114 to 133; it reads YRYMVLVNANLLESWFTGWK. Residues 134–154 form a helical membrane-spanning segment; the sequence is LVFWVFYVIFFGFAWSASVYF. The Extracellular segment spans residues 155 to 204; the sequence is CLFPDTYSYNYIRTEFKDVYNIGVDRVAIFILVAYEKHPSSEEYKLRPAS. A helical membrane pass occupies residues 205–225; sequence VIMIAGTISILVIQYSIMLFC. The Cytoplasmic segment spans residues 226-258; sequence GASMHRQMNEKLKNFSPDNQRLQKQFFKTLLLQ. Residues 259–279 traverse the membrane as a helical segment; it reads ISVPTVLFHMPIFPVLLGPFF. Residues 280-288 are Extracellular-facing; it reads NFEISAESG. A helical membrane pass occupies residues 289-309; sequence IIYSLFSLYPPIDGLIIMTVV. Over 310-345 the chain is Cytoplasmic; sequence TDYRIALTELFLGSHSGAQVEVIPVEVVSILNFSLL.

The protein belongs to the nematode receptor-like protein str family. Detected in ALM and PLM mechanosensory neurons and head neurons.

The protein localises to the cell membrane. Regulates egg-laying and locomotion. Likely to act upstream of goa-1 to suppress 5-hydroxytryptamine (5-HT) biosynthesis in hermaphrodite-specific neurons (HSNs) through inhibition of tph-1 transcription. The polypeptide is G-protein coupled receptor str-33 (Caenorhabditis elegans).